The sequence spans 309 residues: Probable lipid kinase YegS-like (309 aa).

The DAGKc domain occupies 1–134 (MAPSHWRLIL…IDLLRIDADH (134 aa)). ATP-binding positions include T39, 65 to 71 (GDGTLSE), and T96. Mg(2+)-binding residues include L219, D222, and L224. The active-site Proton acceptor is E280.

The protein belongs to the diacylglycerol/lipid kinase family. YegS lipid kinase subfamily. Mg(2+) is required as a cofactor. Requires Ca(2+) as cofactor.

Its subcellular location is the cytoplasm. Functionally, probably phosphorylates lipids; the in vivo substrate is unknown. This Xanthomonas campestris pv. campestris (strain 8004) protein is Probable lipid kinase YegS-like.